Reading from the N-terminus, the 783-residue chain is Isoamylase 1, chloroplastic (783 aa).

A chloroplast-targeting transit peptide spans 1-43 (MDAIKCSSSFLHHTKLNTLFSNHTFPKISAPNFKPLFRPISIS). Catalysis depends on D410, which acts as the Nucleophile. Catalysis depends on E466, which acts as the Proton donor.

This sequence belongs to the glycosyl hydrolase 13 family. Associates with ISA2 to form the heteromultimeric complex Iso1 required for amylopectin synthesis.

Its subcellular location is the plastid. The protein resides in the chloroplast. It catalyses the reaction Hydrolysis of (1-&gt;6)-alpha-D-glucosidic branch linkages in glycogen, amylopectin and their beta-limit dextrins.. It participates in glycan biosynthesis; starch biosynthesis. Involved in the trimming of pre-amylopectin chains. Accelerates the crystallization of nascent amylopectin molecules during starch synthesis. ISA1 and ISA2 work exclusively together as a multimeric holoenzyme. ISA1-ISA2 removes preferentially branches that are very close to other branches. Promotes negative gravitropic responses in shoots by facilitating starch granules (statoliths) formation in hypocotyls. This is Isoamylase 1, chloroplastic from Arabidopsis thaliana (Mouse-ear cress).